The chain runs to 219 residues: Thiamine-phosphate synthase (219 aa).

4-amino-2-methyl-5-(diphosphooxymethyl)pyrimidine contacts are provided by residues 48–52 (QFRQK) and Asn84. Mg(2+) contacts are provided by Asp85 and Asp104. 4-amino-2-methyl-5-(diphosphooxymethyl)pyrimidine is bound at residue Ser123. 150–152 (TPS) contributes to the 2-[(2R,5Z)-2-carboxy-4-methylthiazol-5(2H)-ylidene]ethyl phosphate binding site. Lys153 is a 4-amino-2-methyl-5-(diphosphooxymethyl)pyrimidine binding site. 2-[(2R,5Z)-2-carboxy-4-methylthiazol-5(2H)-ylidene]ethyl phosphate is bound by residues Gly181 and 199–200 (IS).

This sequence belongs to the thiamine-phosphate synthase family. The cofactor is Mg(2+).

The catalysed reaction is 2-[(2R,5Z)-2-carboxy-4-methylthiazol-5(2H)-ylidene]ethyl phosphate + 4-amino-2-methyl-5-(diphosphooxymethyl)pyrimidine + 2 H(+) = thiamine phosphate + CO2 + diphosphate. It catalyses the reaction 2-(2-carboxy-4-methylthiazol-5-yl)ethyl phosphate + 4-amino-2-methyl-5-(diphosphooxymethyl)pyrimidine + 2 H(+) = thiamine phosphate + CO2 + diphosphate. The enzyme catalyses 4-methyl-5-(2-phosphooxyethyl)-thiazole + 4-amino-2-methyl-5-(diphosphooxymethyl)pyrimidine + H(+) = thiamine phosphate + diphosphate. It participates in cofactor biosynthesis; thiamine diphosphate biosynthesis; thiamine phosphate from 4-amino-2-methyl-5-diphosphomethylpyrimidine and 4-methyl-5-(2-phosphoethyl)-thiazole: step 1/1. In terms of biological role, condenses 4-methyl-5-(beta-hydroxyethyl)thiazole monophosphate (THZ-P) and 2-methyl-4-amino-5-hydroxymethyl pyrimidine pyrophosphate (HMP-PP) to form thiamine monophosphate (TMP). The protein is Thiamine-phosphate synthase of Helicobacter pylori (strain HPAG1).